The primary structure comprises 285 residues: Chromatin modification-related protein YNG2 (285 aa).

2 disordered regions span residues 1-24 and 155-201; these read MSFE…SNLK and RTVA…GANF. The span at 8–24 shows a compositional bias: polar residues; the sequence is DPSSALEQATQDVSNLK. A coiled-coil region spans residues 10–36; the sequence is SSALEQATQDVSNLKSESRFLLEEIRA. The PHD-type zinc finger occupies 224-273; it reads QLYCFCQSVSYGEMVACDGPNCKYEWFHYGCVNLDEPPKGQWYCPECRQE. Residues Cys-227, Cys-229, Cys-240, Cys-245, His-251, Cys-254, Cys-267, and Cys-270 each contribute to the Zn(2+) site.

It belongs to the ING family. As to quaternary structure, interacts with H3K4me3 and to a lesser extent with H3K4me2. Component of the NuA4 histone acetyltransferase complex.

Its subcellular location is the nucleus. Functionally, component of the NuA4 histone acetyltransferase complex which is involved in transcriptional activation of selected genes principally by acetylation of nucleosomal histone H4 and H2A. The NuA4 complex is also involved in DNA repair. Involved in cell cycle progression and meiosis. The chain is Chromatin modification-related protein YNG2 (YNG2) from Eremothecium gossypii (strain ATCC 10895 / CBS 109.51 / FGSC 9923 / NRRL Y-1056) (Yeast).